The following is a 377-amino-acid chain: MRVPVAVDDLVAPSTMGERHTVIDRGTSVAAVHTALPPHRYAQSDLTELIADLCLEPGADRALLRRLHTSAGVRTRHLALPIEQYAGLGDFGQANAAWLTVGLALAEEALSGALDAAGLTAADIDLLVCTSITGVAAPSLDARLAVRMGMRADVKRVPVFGLGCVGGAAGLGRLHDYLLGHPDDTAVLLSVELCSLTLQRDGSLANLVAGALFGDGAAAVVARGGDAGRRGAGWPMVAATRGHLYPDTEHLLGWRIGASGFRVVVDAGIPDVVRTHLGGDLRNFLATHGLVPDDIGTWICHPGGPKVLAAVGDALELPDGALDSSWRSLAGVGNLSSASVLRVLEDVATRCRPDPGTWGVLLAMGPGFCAEFVLLRW.

Cys-164 is an active-site residue.

The protein belongs to the thiolase-like superfamily. Chalcone/stilbene synthases family. Homodimer.

The catalysed reaction is 5 malonyl-CoA + 5 H(+) = naphthalene-1,3,6,8-tetrol + 5 CO2 + 5 CoA + H2O. Its pathway is pigment biosynthesis; melanin biosynthesis. Its function is as follows. Involved in the biosynthesis of melanin but also various secondary metabolites containing a naphthoquinone ring. Catalyzes the iterative condensation of five CoA-linked malonyl units to form a pentaketide intermediate. THNS subsequently catalyzes the dual intramolecular Claisen and aldol condensations of this linear intermediate to produce the fused ring of 1,3,6,8-tetrahydroxynaphthalene (THN). The chain is 1,3,6,8-tetrahydroxynaphthalene synthase from Streptomyces peucetius subsp. caesius.